The sequence spans 85 residues: Large ribosomal subunit protein bL27 (85 aa).

The interval 1–20 is disordered; sequence MAHKKAGGSTRNGRDSESKR.

The protein belongs to the bacterial ribosomal protein bL27 family.

The sequence is that of Large ribosomal subunit protein bL27 from Yersinia pseudotuberculosis serotype O:1b (strain IP 31758).